The primary structure comprises 171 residues: Myosin regulatory light polypeptide 9 (171 aa).

Basic residues predominate over residues 1–15 (MSSKRAKAKTTKKRP). The interval 1–21 (MSSKRAKAKTTKKRPQSATSN) is disordered. N-acetylserine is present on Ser2. A Phosphothreonine; by MLCK, CIT and ROCK2 modification is found at Thr19. Ser20 carries the post-translational modification Phosphoserine; by CDC42BP, CIT, MLCK, PAK1, ROCK1, ROCK2, DAPK1, DAPK2 and ZIPK/DAPK3. 2 EF-hand domains span residues 29-64 (SQIQ…LGKN) and 98-133 (DPED…MGDR). 4 residues coordinate Ca(2+): Asp42, Asn44, Asp46, and Asp53.

As to quaternary structure, myosin is a hexamer of 2 heavy chains and 4 light chains: interacts with myosin heavy chain MYO19. Interacts with LUZP1; the interaction results in inhibition of phosphorylation of MYL9 by DAPK3. In terms of processing, phosphorylation increases the actin-activated myosin ATPase activity and thereby regulates the contractile activity. It is required to generate the driving force in the migration of the cells but not necessary for localization of myosin-2 at the leading edge. Phosphorylation is required for myotube formation. Phosphorylated by DAPK3; DAPK3-mediated phosphorylation is inhibited by LUZP1. Smooth muscle tissues and in some, but not all, nonmuscle cells.

The protein resides in the cytoplasm. It is found in the cytoskeleton. Its subcellular location is the cell cortex. Functionally, myosin regulatory subunit that plays an important role in regulation of both smooth muscle and nonmuscle cell contractile activity via its phosphorylation. Implicated in cytokinesis, receptor capping, and cell locomotion. In myoblasts, may regulate PIEZO1-dependent cortical actomyosin assembly involved in myotube formation. The protein is Myosin regulatory light polypeptide 9 (Myl9) of Rattus norvegicus (Rat).